Consider the following 134-residue polypeptide: MADTHHAQGPGKSVLGIGQRIVSIMVEMVETRLRLAVVELEEEKANLFQLLLMLGLTMLFAAFGLMSLMVLIIWAVDPQYRLNAMIATTVVLLLLALIGGIWTLRKSRKSTLLRHTRHELANDRQLLEEESREQ.

Residues 1–55 lie on the Cytoplasmic side of the membrane; it reads MADTHHAQGPGKSVLGIGQRIVSIMVEMVETRLRLAVVELEEEKANLFQLLLMLG. Residues 56 to 76 form a helical membrane-spanning segment; the sequence is LTMLFAAFGLMSLMVLIIWAV. The Periplasmic segment spans residues 77-83; it reads DPQYRLN. The chain crosses the membrane as a helical span at residues 84–104; that stretch reads AMIATTVVLLLLALIGGIWTL. Residues 105–134 lie on the Cytoplasmic side of the membrane; the sequence is RKSRKSTLLRHTRHELANDRQLLEEESREQ.

Its subcellular location is the cell inner membrane. In Escherichia coli O157:H7, this protein is Inner membrane protein YqjE (yqjE).